A 362-amino-acid chain; its full sequence is tRNA-specific 2-thiouridylase MnmA (362 aa).

ATP contacts are provided by residues 13–20 and methionine 39; that span reads GLSGGVDS. An interaction with target base in tRNA region spans residues 99–101; it reads NPD. The active-site Nucleophile is the cysteine 104. Residues cysteine 104 and cysteine 200 are joined by a disulfide bond. Residue glycine 128 participates in ATP binding. An interaction with tRNA region spans residues 150-152; the sequence is KDQ. Cysteine 200 serves as the catalytic Cysteine persulfide intermediate.

The protein belongs to the MnmA/TRMU family.

The protein resides in the cytoplasm. It carries out the reaction S-sulfanyl-L-cysteinyl-[protein] + uridine(34) in tRNA + AH2 + ATP = 2-thiouridine(34) in tRNA + L-cysteinyl-[protein] + A + AMP + diphosphate + H(+). Functionally, catalyzes the 2-thiolation of uridine at the wobble position (U34) of tRNA, leading to the formation of s(2)U34. The chain is tRNA-specific 2-thiouridylase MnmA from Coxiella burnetii (strain RSA 493 / Nine Mile phase I).